The following is a 464-amino-acid chain: Argininosuccinate lyase (464 aa).

The protein belongs to the lyase 1 family. Argininosuccinate lyase subfamily.

It localises to the cytoplasm. The enzyme catalyses 2-(N(omega)-L-arginino)succinate = fumarate + L-arginine. The protein operates within amino-acid biosynthesis; L-arginine biosynthesis; L-arginine from L-ornithine and carbamoyl phosphate: step 3/3. In Pseudomonas putida (strain W619), this protein is Argininosuccinate lyase.